Here is a 173-residue protein sequence, read N- to C-terminus: Adenine phosphoribosyltransferase (173 aa).

It belongs to the purine/pyrimidine phosphoribosyltransferase family. As to quaternary structure, homodimer.

The protein localises to the cytoplasm. The enzyme catalyses AMP + diphosphate = 5-phospho-alpha-D-ribose 1-diphosphate + adenine. The protein operates within purine metabolism; AMP biosynthesis via salvage pathway; AMP from adenine: step 1/1. Catalyzes a salvage reaction resulting in the formation of AMP, that is energically less costly than de novo synthesis. The protein is Adenine phosphoribosyltransferase of Thermoanaerobacter pseudethanolicus (strain ATCC 33223 / 39E) (Clostridium thermohydrosulfuricum).